Here is a 65-residue protein sequence, read N- to C-terminus: Small ribosomal subunit protein bS21 (65 aa).

It belongs to the bacterial ribosomal protein bS21 family.

The polypeptide is Small ribosomal subunit protein bS21 (Cytophaga hutchinsonii (strain ATCC 33406 / DSM 1761 / CIP 103989 / NBRC 15051 / NCIMB 9469 / D465)).